The following is a 575-amino-acid chain: Carboxylesterase 5A (575 aa).

The N-terminal stretch at 1 to 27 (MSGEWGHLGQTLIWAVWVLAAATEGPA) is a signal peptide. An N-linked (GlcNAc...) asparagine glycan is attached at Asn82. The cysteines at positions 94 and 121 are disulfide-linked. Residue Ser226 is the Acyl-ester intermediate of the active site. An intrachain disulfide couples Cys280 to Cys291. Asn281 carries an N-linked (GlcNAc...) asparagine glycan. Glu345 (charge relay system) is an active-site residue. A glycan (N-linked (GlcNAc...) asparagine) is linked at Asn363. The active-site Charge relay system is His454. Residue Asn524 is glycosylated (N-linked (GlcNAc...) asparagine).

Belongs to the type-B carboxylesterase/lipase family. In terms of processing, N-glycosylated.

It is found in the secreted. It carries out the reaction a carboxylic ester + H2O = an alcohol + a carboxylate + H(+). In terms of biological role, involved in the detoxification of xenobiotics and in the activation of ester and amide prodrugs. The sequence is that of Carboxylesterase 5A (CES5A) from Canis lupus familiaris (Dog).